Reading from the N-terminus, the 156-residue chain is MNVIKGVVAAPQARVAIAIARFNNFINDSLLGGAVDALERIGQVASENITVVWVPGAYELPLTVKTLVETQKYDAVVALGTVIRGGTAHFEYVAGECSSGLSSVAMASEIPVAFGVLTTESIEQAIERAGTKAGNKGAEAALTALEMVNVINAIKG.

5-amino-6-(D-ribitylamino)uracil is bound by residues Phe22, 57-59 (AYE), and 81-83 (TVI). 86–87 (GT) serves as a coordination point for (2S)-2-hydroxy-3-oxobutyl phosphate. Residue His89 is the Proton donor of the active site. Phe114 contacts 5-amino-6-(D-ribitylamino)uracil. Arg128 is a binding site for (2S)-2-hydroxy-3-oxobutyl phosphate.

Belongs to the DMRL synthase family. Forms an icosahedral capsid composed of 60 subunits, arranged as a dodecamer of pentamers.

It catalyses the reaction (2S)-2-hydroxy-3-oxobutyl phosphate + 5-amino-6-(D-ribitylamino)uracil = 6,7-dimethyl-8-(1-D-ribityl)lumazine + phosphate + 2 H2O + H(+). It participates in cofactor biosynthesis; riboflavin biosynthesis; riboflavin from 2-hydroxy-3-oxobutyl phosphate and 5-amino-6-(D-ribitylamino)uracil: step 1/2. In terms of biological role, catalyzes the formation of 6,7-dimethyl-8-ribityllumazine by condensation of 5-amino-6-(D-ribitylamino)uracil with 3,4-dihydroxy-2-butanone 4-phosphate. This is the penultimate step in the biosynthesis of riboflavin. The sequence is that of 6,7-dimethyl-8-ribityllumazine synthase from Photorhabdus laumondii subsp. laumondii (strain DSM 15139 / CIP 105565 / TT01) (Photorhabdus luminescens subsp. laumondii).